We begin with the raw amino-acid sequence, 435 residues long: NADH-quinone oxidoreductase subunit D (435 aa).

The protein belongs to the complex I 49 kDa subunit family. NDH-1 is composed of 14 different subunits. Subunits NuoB, C, D, E, F, and G constitute the peripheral sector of the complex.

It is found in the cell inner membrane. It catalyses the reaction a quinone + NADH + 5 H(+)(in) = a quinol + NAD(+) + 4 H(+)(out). Its function is as follows. NDH-1 shuttles electrons from NADH, via FMN and iron-sulfur (Fe-S) centers, to quinones in the respiratory chain. The immediate electron acceptor for the enzyme in this species is believed to be ubiquinone. Couples the redox reaction to proton translocation (for every two electrons transferred, four hydrogen ions are translocated across the cytoplasmic membrane), and thus conserves the redox energy in a proton gradient. The chain is NADH-quinone oxidoreductase subunit D from Xanthomonas campestris pv. campestris (strain 8004).